We begin with the raw amino-acid sequence, 1145 residues long: MAEIVASDEMNEYFNTLEGTLKKEIDIVNDARSRGKDPKPHVEIPLAKDLADRVENLIGVKGVAELIRKLEETMSREEAALALGREVAQGKVGEFDSKSEAIEAAIRVSVAMLTEGVVAAPIEGIDRASIGKNDDGSEYVSIFYAGPIRSAGGTAQALSVLVGDYVRRGVGIDRYKPRKEEVERYIEEIMLYKRVASLQYTPSEEEIRLIVENCPICIDGEPTEAEEVEGHRNLERIDTNRVRGGMALVLAEGLALKAPKIQKHVKNLKIDGWEWLEQLISGVKSSSESDEDEETDGKPKIKPKDKYMRDLIAGRPVFSHPSRPGGFRLRYGRSRNTSFAAAGISPAGMIVMDDFIAPGTQLKVERPGKAAGMAPVDSIEGPTVRLNNGDVIRIDTIDEAYALRSEVEEIIDIGEILINYGDFLENNHPLAPSPYCFEWWIQEYRKAAPDTETNEAELKEPTQEVALDLCKELNIPLHPKFTYLWHDIDNSQYTALADLISKDGLLEADGSFLKLPLQRTIDTGMKKVLEDLLVQHKIQGQALTIEEPLPLIHSLGLDEELSKGWDSLGHEELLENINEIAGFVVRPRAPTRIGARMGRPEKSDKRKMTPAPHALFPIAEAGGNTRSLEKAANFKVNTNSKAGTIPVEIGNRICPACGVEGFEFRCECGEYTLPKLFCPRCGISVNKEKCPKCNSKTTCTSMRKIDFKSIYQKAFESIGERDHLDSFKGVKKMMSKHMTPEPLEKGILRAKHGLFTFKDGTVRYDMSDIPLTHIRPAEIGVSCERMIELGYLKDIYGKPLIDSEQVLCLKVQDLVISYDAADYILRITQYIDDLLVKYYKVAPYYNAKHIDDIVGVLLMGLAPHTSAGVLGRLIGFTTASVGYAHPYFHAAKRRNCDGDEDCVMLLMDGLLNFSRDYLPDKRGGQMDAPLVLTTRLDPSEVDKEAHNIDMCASYPLEFYEATQNIANPKDFEGTMDLVSGRLGTTLQYEEFMFTHDTSNIAAGPLKSAYKTLGTMVEKMDAQLELAKKIRAVDAPDVAERVLTSHFLPDMFGNLRAFSRQRTRCVKCAAKFRRPPLTGSCPKCGGRVILTVHEGAVKKYLQVSIKIAEEYNVSSYTKQRIELIGYDMKSLFENDKSKQMGLSDFM.

A disordered region spans residues Lys-284–Pro-303.

The protein belongs to the archaeal DNA polymerase II family. In terms of assembly, heterodimer of a large subunit and a small subunit.

It carries out the reaction DNA(n) + a 2'-deoxyribonucleoside 5'-triphosphate = DNA(n+1) + diphosphate. The catalysed reaction is Exonucleolytic cleavage in the 3'- to 5'-direction to yield nucleoside 5'-phosphates.. Functionally, possesses two activities: a DNA synthesis (polymerase) and an exonucleolytic activity that degrades single-stranded DNA in the 3'- to 5'-direction. Has a template-primer preference which is characteristic of a replicative DNA polymerase. This is DNA polymerase II large subunit from Methanococcoides burtonii (strain DSM 6242 / NBRC 107633 / OCM 468 / ACE-M).